The chain runs to 423 residues: Glucose-1-phosphate adenylyltransferase (423 aa).

Alpha-D-glucose 1-phosphate is bound by residues Tyr-108, Gly-173, Glu-188–Lys-189, and Ser-207.

This sequence belongs to the bacterial/plant glucose-1-phosphate adenylyltransferase family. In terms of assembly, homotetramer.

It catalyses the reaction alpha-D-glucose 1-phosphate + ATP + H(+) = ADP-alpha-D-glucose + diphosphate. Its pathway is glycan biosynthesis; glycogen biosynthesis. In terms of biological role, involved in the biosynthesis of ADP-glucose, a building block required for the elongation reactions to produce glycogen. Catalyzes the reaction between ATP and alpha-D-glucose 1-phosphate (G1P) to produce pyrophosphate and ADP-Glc. In Francisella tularensis subsp. holarctica (strain FTNF002-00 / FTA), this protein is Glucose-1-phosphate adenylyltransferase.